The primary structure comprises 124 residues: Holo-[acyl-carrier-protein] synthase (124 aa).

2 residues coordinate Mg(2+): Asp-8 and Glu-57.

This sequence belongs to the P-Pant transferase superfamily. AcpS family. Mg(2+) serves as cofactor.

Its subcellular location is the cytoplasm. The enzyme catalyses apo-[ACP] + CoA = holo-[ACP] + adenosine 3',5'-bisphosphate + H(+). Transfers the 4'-phosphopantetheine moiety from coenzyme A to a Ser of acyl-carrier-protein. This Leptospira borgpetersenii serovar Hardjo-bovis (strain JB197) protein is Holo-[acyl-carrier-protein] synthase.